The primary structure comprises 185 residues: Threonylcarbamoyl-AMP synthase (185 aa).

The YrdC-like domain maps to 4-185 (SWRVQQAARE…LATGNIVRPA (182 aa)).

It belongs to the SUA5 family. TsaC subfamily.

Its subcellular location is the cytoplasm. The catalysed reaction is L-threonine + hydrogencarbonate + ATP = L-threonylcarbamoyladenylate + diphosphate + H2O. Required for the formation of a threonylcarbamoyl group on adenosine at position 37 (t(6)A37) in tRNAs that read codons beginning with adenine. Catalyzes the conversion of L-threonine, HCO(3)(-)/CO(2) and ATP to give threonylcarbamoyl-AMP (TC-AMP) as the acyladenylate intermediate, with the release of diphosphate. This Pseudomonas fluorescens (strain Pf0-1) protein is Threonylcarbamoyl-AMP synthase.